Reading from the N-terminus, the 416-residue chain is Isobutyryl-CoA dehydrogenase, mitochondrial (416 aa).

Residues 1–23 (MMLRGGCQRVGARLRGLRRGPRG) constitute a mitochondrion transit peptide. At lysine 51 the chain carries N6-acetyllysine; alternate. The residue at position 51 (lysine 51) is an N6-succinyllysine; alternate. FAD-binding positions include 159 to 168 (YCLTEPGSGS) and 192 to 194 (FIS). Substrate is bound at residue serine 168. Position 232 is an N6-acetyllysine (lysine 232). Lysine 272 bears the N6-succinyllysine mark. 275–278 (NGGR) is a binding site for substrate. FAD-binding positions include arginine 303, 313–314 (SQ), and 372–376 (QMHGG). The active-site Proton acceptor is the glutamate 399. Residue 401-403 (SNE) participates in FAD binding. A substrate-binding site is contributed by arginine 411.

The protein belongs to the acyl-CoA dehydrogenase family. As to quaternary structure, homotetramer, formed by a dimer of dimers. It depends on FAD as a cofactor.

It localises to the mitochondrion. It carries out the reaction 2-methylpropanoyl-CoA + oxidized [electron-transfer flavoprotein] + H(+) = 2-methylpropenoyl-CoA + reduced [electron-transfer flavoprotein]. The catalysed reaction is (2S)-2-methylbutanoyl-CoA + oxidized [electron-transfer flavoprotein] + H(+) = (2E)-2-methylbut-2-enoyl-CoA + reduced [electron-transfer flavoprotein]. It catalyses the reaction propanoyl-CoA + oxidized [electron-transfer flavoprotein] + H(+) = acryloyl-CoA + reduced [electron-transfer flavoprotein]. It functions in the pathway amino-acid degradation; L-valine degradation. Its function is as follows. Isobutyryl-CoA dehydrogenase which catalyzes the conversion of 2-methylpropanoyl-CoA to (2E)-2-methylpropenoyl-CoA in the valine catabolic pathway. To a lesser extent, also able to catalyze the oxidation of (2S)-2-methylbutanoyl-CoA. The protein is Isobutyryl-CoA dehydrogenase, mitochondrial (ACAD8) of Bos taurus (Bovine).